The primary structure comprises 874 residues: Coatomer subunit gamma-1 (874 aa).

Positions 1–11 (MLKKFDKKDEE) are enriched in basic and acidic residues. Positions 1-21 (MLKKFDKKDEESGGGSNPFQH) are disordered. 4 HEAT repeats span residues 64–101 (TEATEAFFAMTKLFQSNDPTLRRMCYLTIKEMSCIAED), 283–320 (KELAPAVSVLQLFCSSPKAALRYAAVRTLNKVAMKHPS), 322–355 (VTACNLDLENLVTDSNRSIATLAITTLLKTGSES), and 356–392 (SIDRLMKQISSFMSEISDEFKVVVVQAISALCQKYPR). Residue Thr594 is modified to Phosphothreonine. The interaction with ZNF289/ARFGAP2 stretch occupies residues 609–874 (RQEIFQEQLA…PVDIILASVG (266 aa)).

The protein belongs to the COPG family. In terms of assembly, oligomeric complex that consists of at least the alpha, beta, beta', gamma, delta, epsilon and zeta subunits. Interacts with ZNF289/ARFGAP2 through its C-terminal appendage domain. Interacts with EGFR upon EGF treatment; interaction is essential for regulation of EGF-dependent nuclear transport of EGFR by retrograde trafficking from the Golgi to the ER. The coatomer interacts with KDEL receptors; the interaction is important for retrograde trafficking of KDEL-bearing proteins from the Golgi to the endoplasmic reticulum. Interacts with COPB1. Interacts with TMED10 (via C-terminus). Interacts with TMED2, TMED3, TMED7 and TMED9.

The protein resides in the cytoplasm. Its subcellular location is the golgi apparatus membrane. It localises to the cytoplasmic vesicle. It is found in the COPI-coated vesicle membrane. Functionally, the coatomer is a cytosolic protein complex that binds to dilysine motifs and reversibly associates with Golgi non-clathrin-coated vesicles, which further mediate biosynthetic protein transport from the ER, via the Golgi up to the trans Golgi network. Coatomer complex is required for budding from Golgi membranes, and is essential for the retrograde Golgi-to-ER transport of dilysine-tagged proteins. In mammals, the coatomer can only be recruited by membranes associated to ADP-ribosylation factors (ARFs), which are small GTP-binding proteins; the complex also influences the Golgi structural integrity, as well as the processing, activity, and endocytic recycling of LDL receptors. Required for limiting lipid storage in lipid droplets. Involved in lipid homeostasis by regulating the presence of perilipin family members PLIN2 and PLIN3 at the lipid droplet surface and promoting the association of adipocyte triglyceride lipase (PNPLA2) with the lipid droplet surface to mediate lipolysis. The chain is Coatomer subunit gamma-1 (COPG1) from Homo sapiens (Human).